The primary structure comprises 267 residues: Small ribosomal subunit protein uS2 (267 aa).

The segment at 234–267 (DNAEEELAEAISQEEPSAAEELPDDMADNENEFE) is disordered. Positions 250–267 (SAAEELPDDMADNENEFE) are enriched in acidic residues.

This sequence belongs to the universal ribosomal protein uS2 family.

The polypeptide is Small ribosomal subunit protein uS2 (Dichelobacter nodosus (strain VCS1703A)).